The chain runs to 288 residues: MSQISAKDVKDLRDKTGVGMMDCKKALEETGGDMQKAIEYLRKKGAALAAKRAGREASEGIIAIRISDDNTSGVIIELNCETDFVARGDDFTGFAAAIADLALENGIASAEAMMSLKLGEAYGNESVEDSIKTMTGRLGEKIDLKRLSLLQTSTGIIASYIHPGSQLGAIVELATDKPAESAELARDIAMQVAASSPIVVDRSVVPAENIEKEKEIFRQQALSQGKPEQFVEKIVTGRLEKYYQEVVLLEQPFIKDSNSRVQGVLEEFARKNGAAVSVTRFVRYQLGA.

Positions 82 to 85 are involved in Mg(2+) ion dislocation from EF-Tu; that stretch reads TDFV.

It belongs to the EF-Ts family.

Its subcellular location is the cytoplasm. In terms of biological role, associates with the EF-Tu.GDP complex and induces the exchange of GDP to GTP. It remains bound to the aminoacyl-tRNA.EF-Tu.GTP complex up to the GTP hydrolysis stage on the ribosome. This chain is Elongation factor Ts, found in Prosthecochloris aestuarii (strain DSM 271 / SK 413).